A 426-amino-acid chain; its full sequence is Histidine--tRNA ligase (426 aa).

Belongs to the class-II aminoacyl-tRNA synthetase family. In terms of assembly, homodimer.

Its subcellular location is the cytoplasm. It catalyses the reaction tRNA(His) + L-histidine + ATP = L-histidyl-tRNA(His) + AMP + diphosphate + H(+). The protein is Histidine--tRNA ligase of Shewanella baltica (strain OS195).